A 265-amino-acid chain; its full sequence is MTIRIAIAGPRGRMGREAVALVQQTDHFELAAVIDRRYDGQNLAEIDGFSGVNAPIYTDAARCFAEVKPDVLIDLTTPEAGKRHTELALRYGVRPVVGTTGFTPEDIERLTKLAEEKEIGAIIAPNFAVGAVLMMKFARMAAKYFTDVEIIELHHDQKLDAPSGTALKTAQLIAEVRPSKKQGHPNEKETLAGARGAEYDGIPIHSVRLPGFVAHQEVIFGGNGQTLTIRHDSFDRRSFMSGVKLAVETVMHLHTLVYGLEHILE.

9 to 14 (GPRGRM) provides a ligand contact to NAD(+). Residue Arg37 participates in NADP(+) binding. NAD(+) contacts are provided by residues 98 to 100 (GTT) and 124 to 127 (APNF). Catalysis depends on His154, which acts as the Proton donor/acceptor. Residue His155 coordinates (S)-2,3,4,5-tetrahydrodipicolinate. Residue Lys158 is the Proton donor of the active site. 164 to 165 (GT) lines the (S)-2,3,4,5-tetrahydrodipicolinate pocket.

Belongs to the DapB family.

It is found in the cytoplasm. It carries out the reaction (S)-2,3,4,5-tetrahydrodipicolinate + NAD(+) + H2O = (2S,4S)-4-hydroxy-2,3,4,5-tetrahydrodipicolinate + NADH + H(+). The catalysed reaction is (S)-2,3,4,5-tetrahydrodipicolinate + NADP(+) + H2O = (2S,4S)-4-hydroxy-2,3,4,5-tetrahydrodipicolinate + NADPH + H(+). The protein operates within amino-acid biosynthesis; L-lysine biosynthesis via DAP pathway; (S)-tetrahydrodipicolinate from L-aspartate: step 4/4. In terms of biological role, catalyzes the conversion of 4-hydroxy-tetrahydrodipicolinate (HTPA) to tetrahydrodipicolinate. This chain is 4-hydroxy-tetrahydrodipicolinate reductase, found in Geobacillus kaustophilus (strain HTA426).